A 63-amino-acid polypeptide reads, in one-letter code: Large ribosomal subunit protein bL28 (63 aa).

The protein belongs to the bacterial ribosomal protein bL28 family.

This chain is Large ribosomal subunit protein bL28, found in Desulfosudis oleivorans (strain DSM 6200 / JCM 39069 / Hxd3) (Desulfococcus oleovorans).